Reading from the N-terminus, the 695-residue chain is Testis-specific Y-encoded-like protein 2 (695 aa).

The segment at 1–56 is disordered; sequence MDRPDEGPPAKTRRLSSSESPQRDPPPPPPPPPLLRLPLPPPQQRPRLQEETEAAQ. Residue Lys11 forms a Glycyl lysine isopeptide (Lys-Gly) (interchain with G-Cter in SUMO2) linkage. Phosphoserine occurs at positions 18 and 20. A compositionally biased stretch (pro residues) spans 23–44; that stretch reads RDPPPPPPPPPLLRLPLPPPQQ. Residues Lys163 and Lys165 each participate in a glycyl lysine isopeptide (Lys-Gly) (interchain with G-Cter in SUMO2) cross-link. Residues 175-207 form a disordered region; sequence EDEDEQESMRSSRRRRRRRRRKQRKVKRESRQR. A compositionally biased stretch (basic residues) spans 185 to 202; the sequence is SSRRRRRRRRRKQRKVKR. Thr340 is subject to Phosphothreonine. Disordered regions lie at residues 471–603 and 632–695; these read DINE…RDIE and VEEE…GKTG. Residues 481 to 491 show a composition bias toward basic and acidic residues; that stretch reads SPDHDEVRNET. The segment covering 496 to 518 has biased composition (acidic residues); sequence ESADDNETTDNNESADDNNENPE. Residues 519-535 show a composition bias toward basic and acidic residues; it reads DNNKNADDNKENPDNNK. Over residues 539–557 the composition is skewed to low complexity; the sequence is GNNFFNGGFWGSHGNNQDS. Acidic residues-rich tracts occupy residues 558–601 and 632–677; these read SDSD…DDRD and VEEE…DLED. Ser670 and Ser673 each carry phosphoserine.

This sequence belongs to the nucleosome assembly protein (NAP) family. In terms of assembly, interacts with histones. Interacts with CASK. Part of a complex containing CASK, TBR1 and TSPYL2. In terms of processing, phosphorylation at Ser-20 and/or Thr-340 impairs function on cell proliferation. Ubiquitously expressed, with highest levels in testis, adrenal gland, cerebral cortex, ovary, skeletal muscle and spleen. Present in testis, adrenal gland, cerebral cortex and ovary (at protein level).

Its subcellular location is the nucleus. The protein localises to the cytoplasm. Its function is as follows. Part of the CASK/TBR1/TSPYL2 transcriptional complex which modulates gene expression in response to neuronal synaptic activity, probably by facilitating nucleosome assembly. May inhibit cell proliferation by inducing p53-dependent CDKN1A expression. This is Testis-specific Y-encoded-like protein 2 (TSPYL2) from Macaca fascicularis (Crab-eating macaque).